The chain runs to 213 residues: Ion-translocating oxidoreductase complex subunit E (213 aa).

The next 6 membrane-spanning stretches (helical) occupy residues 25–45, 46–66, 77–97, 100–120, 135–155, and 181–201; these read TFGLVLGLCPTLAVTTSVENG, IGMAMGTLFVLVGSNMMVSAI, PVEIIVIATFVTIVDMVMEAF, DLYTSLGVFIPLIVVNCIVIG, IIDALGEGTGFLLVLILIGGI, and AMFMTMSPGAFLTIAVLMTIV.

The protein belongs to the NqrDE/RnfAE family. The Rnf complex is probably composed of eight subunits, including RnfA, RnfB, RnfC, RnfD, RnfE and RnfG.

Its subcellular location is the cell membrane. Functionally, part of a membrane-bound complex that couples electron transfer with translocation of ions across the membrane. Catalyzes Na(+) transport, most probably coupled to electron transfer from reduced ferredoxin to methanophenazine and heterodisulfide reductase. Involved in heterodisulfide reduction during methanogenesis from acetate. This chain is Ion-translocating oxidoreductase complex subunit E, found in Methanosarcina acetivorans (strain ATCC 35395 / DSM 2834 / JCM 12185 / C2A).